The sequence spans 244 residues: tRNA pseudouridine synthase A (244 aa).

Catalysis depends on Asp52, which acts as the Nucleophile. Tyr110 provides a ligand contact to substrate.

The protein belongs to the tRNA pseudouridine synthase TruA family. As to quaternary structure, homodimer.

The catalysed reaction is uridine(38/39/40) in tRNA = pseudouridine(38/39/40) in tRNA. Functionally, formation of pseudouridine at positions 38, 39 and 40 in the anticodon stem and loop of transfer RNAs. The sequence is that of tRNA pseudouridine synthase A from Clostridium botulinum (strain Eklund 17B / Type B).